The primary structure comprises 227 residues: Urease accessory protein UreF 2 (227 aa).

The protein belongs to the UreF family. In terms of assembly, ureD, UreF and UreG form a complex that acts as a GTP-hydrolysis-dependent molecular chaperone, activating the urease apoprotein by helping to assemble the nickel containing metallocenter of UreC. The UreE protein probably delivers the nickel.

It localises to the cytoplasm. Functionally, required for maturation of urease via the functional incorporation of the urease nickel metallocenter. The polypeptide is Urease accessory protein UreF 2 (Brucella anthropi (strain ATCC 49188 / DSM 6882 / CCUG 24695 / JCM 21032 / LMG 3331 / NBRC 15819 / NCTC 12168 / Alc 37) (Ochrobactrum anthropi)).